We begin with the raw amino-acid sequence, 252 residues long: Ciliogenesis and planar polarity effector 2 (252 aa).

Residues 46 to 252 (QMNVDLVRYK…LRETSSEIIV (207 aa)) are small GTPase-like. GTP is bound by residues 62-67 (TGVGKS) and 173-176 (TKFD).

The protein belongs to the small GTPase superfamily. Rab family.

It localises to the cytoplasm. It is found in the cytoskeleton. The protein resides in the cilium basal body. In terms of biological role, potential effector of the planar cell polarity signaling pathway. Plays a role in targeted membrane trafficking most probably at the level of vesicle fusion with membranes. Involved in cilium biogenesis by regulating the transport of cargo proteins to the basal body and to the apical tips of cilia. More generally involved in exocytosis in secretory cells. In Danio rerio (Zebrafish), this protein is Ciliogenesis and planar polarity effector 2 (cplane2).